The primary structure comprises 170 residues: Large ribosomal subunit protein uL18c (170 aa).

A chloroplast-targeting transit peptide spans 1 to 63; sequence MLASPALAGA…QADRIARHVR (63 aa).

The protein belongs to the universal ribosomal protein uL18 family. As to quaternary structure, part of the 50S ribosomal subunit; contacts the 5S rRNA.

It is found in the plastid. It localises to the chloroplast. Binds 5S rRNA, forms part of the central protuberance of the 50S subunit. This chain is Large ribosomal subunit protein uL18c (RPL18), found in Oryza sativa subsp. japonica (Rice).